We begin with the raw amino-acid sequence, 478 residues long: MDDDNGLELSLGLSLGGSSGKAKARDAPLEPKAEPQVEESSSKGGLQTPDAPSGKFYQKSADNHEQNSKQRHSPVAPQFGNFWGQPGNSSGPVVDGSVEPVSHQPQLSSYQDGRMPINSGNNSEEQKPVSGNHKLPSEEMNFQKKHQTASDQPDAFSKSSDGGAKNAPISISTDDGSTGENEDVAESEAEGSNSWLVAQREDSAKGSVVNKGTDRKRSADAAADGFKGKRQPSFSGSESSSGKLTPGNLISMQASNVVALPYQVPGQVSGPPVLTNAPNFHPVCTVQLRPPTNGGLAVQTMGSASQVAFGYPAVQLPTLETGSSWAFGAPPQALSSFTAKDKADQTGTKQVDDGKKPREAGASSSAHAEDEKKADRGLSLMGSAIRPGIAPNVKFGGSGSYPDLPWVSTIGAGPNGRTISGVTYKFGRNEVKIVCACHGTHMSPEEFMRHASADAPAQDNSATLPAFPAGNQATSAEN.

3 disordered regions span residues methionine 1–glycine 247, serine 336–alanine 374, and aspartate 454–asparagine 478. Positions lysine 23–proline 35 are enriched in basic and acidic residues. Residues isoleucine 169–glycine 179 show a composition bias toward polar residues. Residues glutamate 180–alanine 189 are compositionally biased toward acidic residues. Residues serine 233–glycine 242 are compositionally biased toward low complexity. A compositionally biased stretch (basic and acidic residues) spans alanine 339–glutamate 359.

Belongs to the Ninja family.

Its subcellular location is the nucleus. The polypeptide is Ninja-family protein 7 (Zea mays (Maize)).